A 190-amino-acid polypeptide reads, in one-letter code: Probable nicotinate-nucleotide adenylyltransferase (190 aa).

It belongs to the NadD family.

The catalysed reaction is nicotinate beta-D-ribonucleotide + ATP + H(+) = deamido-NAD(+) + diphosphate. Its pathway is cofactor biosynthesis; NAD(+) biosynthesis; deamido-NAD(+) from nicotinate D-ribonucleotide: step 1/1. Catalyzes the reversible adenylation of nicotinate mononucleotide (NaMN) to nicotinic acid adenine dinucleotide (NaAD). The sequence is that of Probable nicotinate-nucleotide adenylyltransferase from Borrelia turicatae (strain 91E135).